The chain runs to 489 residues: Neuropeptide CCHamide-2 receptor (489 aa).

Over 1-74 (MYASLMDVGQ…DRPETYIVTV (74 aa)) the chain is Extracellular. N-linked (GlcNAc...) asparagine glycans are attached at residues Asn-25 and Asn-50. The helical transmembrane segment at 75-95 (LYTLIFIVGVLGNGTLVIIFF) threads the bilayer. The Cytoplasmic portion of the chain corresponds to 96–107 (RHRSMRNIPNTY). Residues 108–128 (ILSLALADLLVILVCVPVATI) traverse the membrane as a helical segment. The Extracellular portion of the chain corresponds to 129–143 (VYTQESWPFERNMCR). Cys-142 and Cys-225 are oxidised to a cystine. A helical transmembrane segment spans residues 144 to 164 (ISEFFKDISIGVSVFTLTALS). Over 165–184 (GERYCAIVNPLRKLQTKPLT) the chain is Cytoplasmic. A helical transmembrane segment spans residues 185-205 (VFTAVMIWILAILLGMPSVLF). Residues 206–235 (SDIKSYPVFTATGNMTIEVCSPFRDPEYAK) lie on the Extracellular side of the membrane. N-linked (GlcNAc...) asparagine glycosylation is present at Asn-219. A helical transmembrane segment spans residues 236 to 256 (FMVAGKALVYYLLPLSIIGAL). Over 257 to 293 (YIMMAKRLHMSARNMPGEQQSMQSRTQARARLHVARM) the chain is Cytoplasmic. The helical transmembrane segment at 294-314 (VVAFVVVFFICFFPYHVFELW) threads the bilayer. Residues 315–333 (YHFYPTAEEDFDEFWNVLR) lie on the Extracellular side of the membrane. A helical transmembrane segment spans residues 334–354 (IVGFCTSFLNSCVNPVALYCV). At 355–489 (SGVFRQHFNR…NRYESGVMRY (135 aa)) the chain is on the cytoplasmic side. Positions 438-468 (SFHRQDSMPLQHGNAHGGGAGGGSSGLGAGG) are disordered. Residues 452–468 (AHGGGAGGGSSGLGAGG) show a composition bias toward gly residues.

The protein belongs to the G-protein coupled receptor 1 family. As to expression, highly expressed in larval brain. Also highly expressed in adult brain with very low levels in larval and adult gut.

The protein resides in the cell membrane. Receptor for the neuropeptide CCHamide-2. The chain is Neuropeptide CCHamide-2 receptor from Drosophila melanogaster (Fruit fly).